Reading from the N-terminus, the 310-residue chain is Cytosolic Fe-S cluster assembly factor NUBP1 homolog (310 aa).

Positions 12, 26, 29, and 35 each coordinate [4Fe-4S] cluster. ATP is bound at residue 66–73 (GKGGVGKS). The [4Fe-4S] cluster site is built by Cys240 and Cys243.

Belongs to the Mrp/NBP35 ATP-binding proteins family. NUBP1/NBP35 subfamily. Heterotetramer of 2 NUBP1 and 2 NUBP2 chains. [4Fe-4S] cluster is required as a cofactor.

The protein localises to the cytoplasm. Component of the cytosolic iron-sulfur (Fe/S) protein assembly (CIA) machinery. Required for maturation of extramitochondrial Fe-S proteins. The NUBP1-NUBP2 heterotetramer forms a Fe-S scaffold complex, mediating the de novo assembly of an Fe-S cluster and its transfer to target apoproteins. The protein is Cytosolic Fe-S cluster assembly factor NUBP1 homolog of Brugia malayi (Filarial nematode worm).